We begin with the raw amino-acid sequence, 157 residues long: 3-hydroxyacyl-[acyl-carrier-protein] dehydratase FabZ (157 aa).

Histidine 58 is an active-site residue.

Belongs to the thioester dehydratase family. FabZ subfamily.

The protein resides in the cytoplasm. It carries out the reaction a (3R)-hydroxyacyl-[ACP] = a (2E)-enoyl-[ACP] + H2O. Its function is as follows. Involved in unsaturated fatty acids biosynthesis. Catalyzes the dehydration of short chain beta-hydroxyacyl-ACPs and long chain saturated and unsaturated beta-hydroxyacyl-ACPs. In Brucella ovis (strain ATCC 25840 / 63/290 / NCTC 10512), this protein is 3-hydroxyacyl-[acyl-carrier-protein] dehydratase FabZ.